The chain runs to 135 residues: Histone H2A.4 (135 aa).

This sequence belongs to the histone H2A family. As to quaternary structure, the nucleosome is a histone octamer containing two molecules each of H2A, H2B, H3 and H4 assembled in one H3-H4 heterotetramer and two H2A-H2B heterodimers. The octamer wraps approximately 147 bp of DNA. Expressed preferentially in meristematic tissues of young seedlings, in stigma and ovary but not in pollen.

The protein localises to the nucleus. It is found in the chromosome. Functionally, core component of nucleosome. Nucleosomes wrap and compact DNA into chromatin, limiting DNA accessibility to the cellular machineries which require DNA as a template. Histones thereby play a central role in transcription regulation, DNA repair, DNA replication and chromosomal stability. DNA accessibility is regulated via a complex set of post-translational modifications of histones, also called histone code, and nucleosome remodeling. In Triticum aestivum (Wheat), this protein is Histone H2A.4 (TH254).